The chain runs to 53 residues: Zinc metalloproteinase-disintegrin-like alborhagin (53 aa).

This sequence belongs to the venom metalloproteinase (M12B) family. P-III subfamily. P-IIIb sub-subfamily. In terms of assembly, monomer. Zn(2+) is required as a cofactor. In terms of processing, contains numerous disulfide bonds. Post-translationally, glycosylated. As to expression, expressed by the venom gland.

Its subcellular location is the secreted. Alborhagin-induced platelet aggregation, but not shape change, is inhibited by EDTA, suggesting that the platelet activation (shape change) is independent of divalent cation or metalloproteinase activity. In terms of biological role, induces platelet activation and glycoprotein VI (GP6)-dependent platelet aggregation. Induces ectodomain cleavage of GP6 by activating endogenous platelet metalloproteinases (probably ADAM10). Has fibrinogenolytic activity against the alpha chain of fibrinogen (FGA). Recognizes distinct binding sites as convulxin, since alborhagin has minimal effect on convulxin binding to GPVI-expressing cells. Its function is as follows. Disintegrin alborhagin-C: 42 kDa fragment of alborhagin autoproteolysed that does not show platelet activation. This is Zinc metalloproteinase-disintegrin-like alborhagin from Trimeresurus albolabris (White-lipped pit viper).